Here is a 223-residue protein sequence, read N- to C-terminus: Ribonuclease S-2 (223 aa).

Positions 1–22 are cleaved as a signal peptide; it reads MAKSQLVSALFVFFFSLSPIYG. The cysteines at positions 38 and 44 are disulfide-linked. Asparagine 51 is a glycosylation site (N-linked (GlcNAc...) asparagine). The active-site Proton donor is the histidine 55. RNA is bound by residues histidine 55 and 94–95; that span reads QL. Cystine bridges form between cysteine 71–cysteine 119, cysteine 178–cysteine 211, and cysteine 194–cysteine 205. Glutamine 112 is a catalytic residue. Position 115–116 (115–116) interacts with RNA; it reads KH. The Proton acceptor role is filled by histidine 116.

This sequence belongs to the RNase T2 family. Pistil.

The protein localises to the secreted. It localises to the extracellular space. It catalyses the reaction a ribonucleotidyl-ribonucleotide-RNA + H2O = a 3'-end 3'-phospho-ribonucleotide-RNA + a 5'-end dephospho-ribonucleoside-RNA + H(+). In terms of biological role, self-incompatibility (SI) is the inherited ability of a flowering plant to prevent self-fertilization by discriminating between self and non-self pollen during pollination. In many species of the Solanaceae, self-incompatibility is controlled by the single, multiallelic locus S. This stylar glycoprotein is associated with expression of self-incompatibility in potato. The protein is Ribonuclease S-2 of Solanum tuberosum (Potato).